The following is a 418-amino-acid chain: Lariat debranching enzyme (418 aa).

A divalent metal cation-binding residues include Cys-8, His-10, Asp-39, and Asn-84. Residues 124–154 (SGIYNERHYRSGHFERPPYNESTIRSVYHVR) form a lariat recognition loop region. Positions 174, 226, and 228 each coordinate a divalent metal cation. The interval 372 to 418 (GERTDIPASLAPSDLPTYDSEEIPIDDIDEIEEMEEAKADDHTRDDA) is disordered. Positions 390–406 (DSEEIPIDDIDEIEEME) are enriched in acidic residues. The segment covering 407 to 418 (EAKADDHTRDDA) has biased composition (basic and acidic residues).

Belongs to the lariat debranching enzyme family. Fe(2+) is required as a cofactor. Zn(2+) serves as cofactor. The cofactor is Mn(2+). Widely expressed. Expressed in roots, stems, cauline and rosette leaves, flower buds and siliques.

It localises to the nucleus. Active in presence of diverse metals including Fe(2+), Zn(2+), Mn(2+). Binds two metal cations in two adjacent alpha and beta metal-binding pockets. Cleaves the 2'-5' phosphodiester linkage at the branch point of lariat intron pre-mRNAs after splicing and converts them into linear molecules that are subsequently degraded. It thereby facilitates ribonucleotide turnover. It may also participate in retrovirus replication via an RNA lariat intermediate in cDNA synthesis. Plays en essential role during embryogenesis. This is Lariat debranching enzyme (DBR1) from Arabidopsis thaliana (Mouse-ear cress).